Consider the following 50-residue polypeptide: Large ribosomal subunit protein bL33B (50 aa).

The protein belongs to the bacterial ribosomal protein bL33 family.

In Mycoplasmopsis agalactiae (strain NCTC 10123 / CIP 59.7 / PG2) (Mycoplasma agalactiae), this protein is Large ribosomal subunit protein bL33B.